A 312-amino-acid polypeptide reads, in one-letter code: Methionyl-tRNA formyltransferase (312 aa).

Residue 107-110 (SLLP) participates in (6S)-5,6,7,8-tetrahydrofolate binding.

The protein belongs to the Fmt family.

It catalyses the reaction L-methionyl-tRNA(fMet) + (6R)-10-formyltetrahydrofolate = N-formyl-L-methionyl-tRNA(fMet) + (6S)-5,6,7,8-tetrahydrofolate + H(+). Its function is as follows. Attaches a formyl group to the free amino group of methionyl-tRNA(fMet). The formyl group appears to play a dual role in the initiator identity of N-formylmethionyl-tRNA by promoting its recognition by IF2 and preventing the misappropriation of this tRNA by the elongation apparatus. The polypeptide is Methionyl-tRNA formyltransferase (Endomicrobium trichonymphae).